The sequence spans 644 residues: Exoribonuclease 2 (644 aa).

In terms of domain architecture, RNB spans 189–516 (REDLTALDFV…NHRLLKAVIK (328 aa)). Residues 561–643 (DTRFAAEIVD…ETRSIIARPV (83 aa)) form the S1 motif domain.

It belongs to the RNR ribonuclease family. RNase II subfamily.

It is found in the cytoplasm. It catalyses the reaction Exonucleolytic cleavage in the 3'- to 5'-direction to yield nucleoside 5'-phosphates.. Its function is as follows. Involved in mRNA degradation. Hydrolyzes single-stranded polyribonucleotides processively in the 3' to 5' direction. In Escherichia coli O45:K1 (strain S88 / ExPEC), this protein is Exoribonuclease 2.